The sequence spans 60 residues: Large ribosomal subunit protein bL32 (60 aa).

It belongs to the bacterial ribosomal protein bL32 family.

The polypeptide is Large ribosomal subunit protein bL32 (Petrotoga mobilis (strain DSM 10674 / SJ95)).